Consider the following 331-residue polypeptide: Phosphoribosylformylglycinamidine cyclo-ligase (331 aa).

Belongs to the AIR synthase family.

The protein resides in the cytoplasm. It carries out the reaction 2-formamido-N(1)-(5-O-phospho-beta-D-ribosyl)acetamidine + ATP = 5-amino-1-(5-phospho-beta-D-ribosyl)imidazole + ADP + phosphate + H(+). The protein operates within purine metabolism; IMP biosynthesis via de novo pathway; 5-amino-1-(5-phospho-D-ribosyl)imidazole from N(2)-formyl-N(1)-(5-phospho-D-ribosyl)glycinamide: step 2/2. This is Phosphoribosylformylglycinamidine cyclo-ligase from Clostridium botulinum (strain Okra / Type B1).